Here is a 588-residue protein sequence, read N- to C-terminus: Acid beta-fructofuranosidase 1, vacuolar (588 aa).

The Cytoplasmic segment spans residues 1–31 (MDTSTSAYAPLPGEDPLFSGHPPASLRRSWK). Residues 1–115 (MDTSTSAYAP…LSYNWTNAMF (115 aa)) constitute a propeptide, removed in mature form. Residues 32–52 (GFAVIFASVLFLLSLVGLIIH) traverse the membrane as a helical; Signal-anchor for type II membrane protein segment. At 53-588 (QGPQQPPDVM…LRALRKEVGR (536 aa)) the chain is on the lumenal side. The segment at 57-86 (QPPDVMPDKQDEHHHPQSTTPASETTASWE) is disordered. Over residues 62 to 71 (MPDKQDEHHH) the composition is skewed to basic and acidic residues. Polar residues predominate over residues 73–84 (QSTTPASETTAS). Residues 130–133 (WMND), Gln-149, and Trp-157 contribute to the substrate site. Residue Asp-133 is part of the active site. N-linked (GlcNAc...) asparagine glycosylation is present at Asn-159. Residue 192–193 (WS) coordinates substrate. Asn-226 carries an N-linked (GlcNAc...) asparagine glycan. Residues 256–257 (RD), Glu-311, and Asp-344 contribute to the substrate site. A disulfide bond links Cys-499 and Cys-545.

It belongs to the glycosyl hydrolase 32 family. Monomer. May be present in two forms, a 70 kDa monomer and a heterodimer of the 30 kDa and 38 kDa subunits. The ratio of the levels of the two forms within cells appears to be regulated developmentally. In terms of processing, glycosylated. Expressed in buds, stems, roots and leaves. Expressed in the epidermal cells of young leaves and of primordial leaves.

Its subcellular location is the membrane. The protein localises to the vacuole lumen. The enzyme catalyses Hydrolysis of terminal non-reducing beta-D-fructofuranoside residues in beta-D-fructofuranosides.. Acidic vacuolar invertase involved in light-induced bud burst. This is Acid beta-fructofuranosidase 1, vacuolar from Rosa hybrid cultivar.